A 299-amino-acid polypeptide reads, in one-letter code: Zinc finger protein-like 1 homolog (299 aa).

The B box-type; degenerate zinc finger occupies Met1–Trp43. Residues Cys53–Ser101 form an RING-type; atypical zinc finger. The tract at residues Ala200–Thr231 is disordered. Ser215 carries the phosphoserine modification. A helical transmembrane segment spans residues Trp256 to Leu276.

Belongs to the ZFPL1 family.

It is found in the membrane. The sequence is that of Zinc finger protein-like 1 homolog from Drosophila melanogaster (Fruit fly).